A 592-amino-acid chain; its full sequence is Inactive metallocarboxypeptidase ECM14 (592 aa).

A signal peptide spans 1–21; that stretch reads MRQFTHGTLLAILALANTISA. The propeptide occupies 22 to 174; sequence IPSFSANNYP…QTVYESYPSS (153 aa). A compositionally biased stretch (polar residues) spans 170–179; that stretch reads SYPSSSQRPT. The tract at residues 170–191 is disordered; the sequence is SYPSSSQRPTDNGRGFLPSRES. The region spanning 202–521 is the Peptidase M14 domain; it reads DYQPLSVIGP…NAVMVLAKFL (320 aa). Zn(2+) is bound by residues His264 and Glu267. Substrate is bound by residues 264–267, Arg322, and 339–340; these read HARE and DR. Cys333 and Cys356 are oxidised to a cystine. Asn349 carries N-linked (GlcNAc...) asparagine glycosylation. His396 contacts Zn(2+). Substrate is bound at residue 397 to 398; it reads SY. The interval 542 to 592 is disordered; it reads ADKPILDDGDDDEEEDGQDKKDDSWIPDEYKNDNDHDDDDDGWGLRRRRKR. The span at 548-558 shows a compositional bias: acidic residues; that stretch reads DDGDDDEEEDG. Residues 559 to 575 show a composition bias toward basic and acidic residues; it reads QDKKDDSWIPDEYKNDN.

Belongs to the peptidase M14 family. It depends on Zn(2+) as a cofactor.

Its subcellular location is the vacuole. It localises to the secreted. Its function is as follows. Inactive carboxypeptidase that may play a role in cell wall organization and biogenesis. The chain is Inactive metallocarboxypeptidase ECM14 (ECM14) from Ajellomyces dermatitidis (strain ER-3 / ATCC MYA-2586) (Blastomyces dermatitidis).